A 130-amino-acid polypeptide reads, in one-letter code: Small ribosomal subunit protein uS8 (130 aa).

This sequence belongs to the universal ribosomal protein uS8 family. As to quaternary structure, part of the 30S ribosomal subunit. Contacts proteins S5 and S12.

One of the primary rRNA binding proteins, it binds directly to 16S rRNA central domain where it helps coordinate assembly of the platform of the 30S subunit. The protein is Small ribosomal subunit protein uS8 of Enterobacter sp. (strain 638).